Reading from the N-terminus, the 188-residue chain is Threonylcarbamoyl-AMP synthase (188 aa).

Positions 3 to 188 (QLQPSAVATT…RSGQILRNGS (186 aa)) constitute a YrdC-like domain.

The protein belongs to the SUA5 family. TsaC subfamily.

It localises to the cytoplasm. The catalysed reaction is L-threonine + hydrogencarbonate + ATP = L-threonylcarbamoyladenylate + diphosphate + H2O. Functionally, required for the formation of a threonylcarbamoyl group on adenosine at position 37 (t(6)A37) in tRNAs that read codons beginning with adenine. Catalyzes the conversion of L-threonine, HCO(3)(-)/CO(2) and ATP to give threonylcarbamoyl-AMP (TC-AMP) as the acyladenylate intermediate, with the release of diphosphate. The sequence is that of Threonylcarbamoyl-AMP synthase from Shewanella frigidimarina (strain NCIMB 400).